The following is a 123-amino-acid chain: MARVTVEDCIEKIPNRFRLVLMAAHRARNISAGSELTIDRDNDKNPVVALREIADETLDMDSLKDSLVNGLQRVLPSEDEEDAAREERGQQMEALPAPPVELDEAEMLKALQNDRDGAPDGRL.

The tract at residues 72–100 is disordered; the sequence is QRVLPSEDEEDAAREERGQQMEALPAPPV.

The protein belongs to the RNA polymerase subunit omega family. As to quaternary structure, the RNAP catalytic core consists of 2 alpha, 1 beta, 1 beta' and 1 omega subunit. When a sigma factor is associated with the core the holoenzyme is formed, which can initiate transcription.

It carries out the reaction RNA(n) + a ribonucleoside 5'-triphosphate = RNA(n+1) + diphosphate. Functionally, promotes RNA polymerase assembly. Latches the N- and C-terminal regions of the beta' subunit thereby facilitating its interaction with the beta and alpha subunits. The protein is DNA-directed RNA polymerase subunit omega of Maricaulis maris (strain MCS10) (Caulobacter maris).